Reading from the N-terminus, the 229-residue chain is Enolase-phosphatase E1 (229 aa).

Belongs to the HAD-like hydrolase superfamily. MasA/MtnC family. As to quaternary structure, monomer. Mg(2+) is required as a cofactor.

The enzyme catalyses 5-methylsulfanyl-2,3-dioxopentyl phosphate + H2O = 1,2-dihydroxy-5-(methylsulfanyl)pent-1-en-3-one + phosphate. It participates in amino-acid biosynthesis; L-methionine biosynthesis via salvage pathway; L-methionine from S-methyl-5-thio-alpha-D-ribose 1-phosphate: step 3/6. Its pathway is amino-acid biosynthesis; L-methionine biosynthesis via salvage pathway; L-methionine from S-methyl-5-thio-alpha-D-ribose 1-phosphate: step 4/6. Functionally, bifunctional enzyme that catalyzes the enolization of 2,3-diketo-5-methylthiopentyl-1-phosphate (DK-MTP-1-P) into the intermediate 2-hydroxy-3-keto-5-methylthiopentenyl-1-phosphate (HK-MTPenyl-1-P), which is then dephosphorylated to form the acireductone 1,2-dihydroxy-3-keto-5-methylthiopentene (DHK-MTPene). This Pectobacterium carotovorum subsp. carotovorum (strain PC1) protein is Enolase-phosphatase E1.